A 233-amino-acid chain; its full sequence is Endonuclease V (233 aa).

The Mg(2+) site is built by Asp48 and Asp116.

Belongs to the endonuclease V family. The cofactor is Mg(2+).

Its subcellular location is the cytoplasm. It carries out the reaction Endonucleolytic cleavage at apurinic or apyrimidinic sites to products with a 5'-phosphate.. In terms of biological role, DNA repair enzyme involved in the repair of deaminated bases. Selectively cleaves double-stranded DNA at the second phosphodiester bond 3' to a deoxyinosine leaving behind the intact lesion on the nicked DNA. The polypeptide is Endonuclease V (Streptomyces coelicolor (strain ATCC BAA-471 / A3(2) / M145)).